The sequence spans 198 residues: RxLR effector protein CRE4 (198 aa).

A signal peptide spans 1–20 (MLRSFLLIVATVSLFGQCKP). Positions 43–52 (RFVRTNDEER) match the RxLR-dEER motif.

The protein belongs to the RxLR effector family.

It localises to the secreted. It is found in the host cytoplasm. The protein localises to the host nucleus. The protein resides in the host nucleolus. Effector that is involved in host plant infection. Contributes to virulence during the early infection stage, by inhibiting plant defense responses induced by both PAMP-triggered immunity (PTI) and effector-triggered immunity (ETI). This chain is RxLR effector protein CRE4 (CRE4), found in Phytophthora infestans (strain T30-4) (Potato late blight agent).